Reading from the N-terminus, the 529-residue chain is Bifunctional purine biosynthesis protein PurH (529 aa).

The 148-residue stretch at 1 to 148 folds into the MGS-like domain; it reads MQQRRPIRRA…KNHKDVAIVV (148 aa).

It belongs to the PurH family.

The enzyme catalyses (6R)-10-formyltetrahydrofolate + 5-amino-1-(5-phospho-beta-D-ribosyl)imidazole-4-carboxamide = 5-formamido-1-(5-phospho-D-ribosyl)imidazole-4-carboxamide + (6S)-5,6,7,8-tetrahydrofolate. The catalysed reaction is IMP + H2O = 5-formamido-1-(5-phospho-D-ribosyl)imidazole-4-carboxamide. The protein operates within purine metabolism; IMP biosynthesis via de novo pathway; 5-formamido-1-(5-phospho-D-ribosyl)imidazole-4-carboxamide from 5-amino-1-(5-phospho-D-ribosyl)imidazole-4-carboxamide (10-formyl THF route): step 1/1. It participates in purine metabolism; IMP biosynthesis via de novo pathway; IMP from 5-formamido-1-(5-phospho-D-ribosyl)imidazole-4-carboxamide: step 1/1. In Yersinia enterocolitica serotype O:8 / biotype 1B (strain NCTC 13174 / 8081), this protein is Bifunctional purine biosynthesis protein PurH.